We begin with the raw amino-acid sequence, 163 residues long: NADPH-dependent 7-cyano-7-deazaguanine reductase (163 aa).

Residues 1 to 10 show a composition bias toward basic residues; the sequence is MSKPPRRSPR. Residues 1-23 form a disordered region; sequence MSKPPRRSPRKPTPASPELQLGH. The Thioimide intermediate role is filled by Cys-61. Asp-68 functions as the Proton donor in the catalytic mechanism. Residues 83–85 and 102–103 contribute to the substrate site; these read LES and HE.

This sequence belongs to the GTP cyclohydrolase I family. QueF type 1 subfamily.

Its subcellular location is the cytoplasm. It catalyses the reaction 7-aminomethyl-7-carbaguanine + 2 NADP(+) = 7-cyano-7-deazaguanine + 2 NADPH + 3 H(+). Its pathway is tRNA modification; tRNA-queuosine biosynthesis. Functionally, catalyzes the NADPH-dependent reduction of 7-cyano-7-deazaguanine (preQ0) to 7-aminomethyl-7-deazaguanine (preQ1). The protein is NADPH-dependent 7-cyano-7-deazaguanine reductase of Rhodopseudomonas palustris (strain BisA53).